The following is a 385-amino-acid chain: tRNA(Met) cytidine acetate ligase (385 aa).

ATP contacts are provided by residues 7–20 (VAEY…HEFL), Gly101, Asn153, and Arg178.

The protein belongs to the TmcAL family.

It is found in the cytoplasm. The catalysed reaction is cytidine(34) in elongator tRNA(Met) + acetate + ATP = N(4)-acetylcytidine(34) in elongator tRNA(Met) + AMP + diphosphate. Functionally, catalyzes the formation of N(4)-acetylcytidine (ac(4)C) at the wobble position of elongator tRNA(Met), using acetate and ATP as substrates. First activates an acetate ion to form acetyladenylate (Ac-AMP) and then transfers the acetyl group to tRNA to form ac(4)C34. The polypeptide is tRNA(Met) cytidine acetate ligase (Lactobacillus gasseri (strain ATCC 33323 / DSM 20243 / BCRC 14619 / CIP 102991 / JCM 1131 / KCTC 3163 / NCIMB 11718 / NCTC 13722 / AM63)).